The primary structure comprises 185 residues: Probable chorismate pyruvate-lyase 1 (185 aa).

Arg68, Leu106, and Glu164 together coordinate substrate.

The protein belongs to the UbiC family.

The protein localises to the cytoplasm. It catalyses the reaction chorismate = 4-hydroxybenzoate + pyruvate. Its pathway is cofactor biosynthesis; ubiquinone biosynthesis. Removes the pyruvyl group from chorismate, with concomitant aromatization of the ring, to provide 4-hydroxybenzoate (4HB) for the ubiquinone pathway. The chain is Probable chorismate pyruvate-lyase 1 from Pseudomonas entomophila (strain L48).